The following is a 442-amino-acid chain: 3-ketoacyl-CoA thiolase (442 aa).

The active-site Acyl-thioester intermediate is cysteine 105. Residues histidine 398 and cysteine 428 each act as proton acceptor in the active site.

Belongs to the thiolase-like superfamily. Thiolase family. As to quaternary structure, heterotetramer of two alpha chains (FadJ) and two beta chains (FadI).

Its subcellular location is the cytoplasm. It carries out the reaction an acyl-CoA + acetyl-CoA = a 3-oxoacyl-CoA + CoA. It participates in lipid metabolism; fatty acid beta-oxidation. Catalyzes the final step of fatty acid oxidation in which acetyl-CoA is released and the CoA ester of a fatty acid two carbons shorter is formed. The protein is 3-ketoacyl-CoA thiolase of Aliivibrio fischeri (strain ATCC 700601 / ES114) (Vibrio fischeri).